A 518-amino-acid chain; its full sequence is MPTVVVMDVSLSMTRPVSIEGSEEYQRKHLAAHGLTMLFEHMATNYKLEFTALVVFSSLWELMVPFTRDYNTLQEALSNMDDYDKTCLESALVGVCNIVQQEWGGAIPCQVVLVTDGCLGIGRGSLRHSLATQNQRSESNRFPLPFPFPSKLYIMCMANLEELQSTDSLECLERLIDLNNGEGQIFTIDGPLCLKNVQSMFGKLIDLAYTPFHAVLKCGHLTADVQVFPRPEPFVVDEEIDPIPKVINTDLEIVGFIDIADISSPPVLSRHLVLPIALNKEGDEVGTGITDDNEDENSANQIAGKIPNFCVLLHGSLKVEGMVAIVQLGPEWHGMLYSQADSKKKSNLMMSLFEPGPEPLPWLGKMAQLGPISDAKENPYGEDDNKSPFPLQPKNKRSYAQNVTVWIKPSGLQTDVQKILRNARKLPEKTQTFYKELNRLRKAALAFGFLDLLKGVADMLERECTLLPETAHPDAAFQLTHAAQQLKLASTGTSEYAAYDQNITPLHTDFSGSSTERI.

A VWFA domain is found at 2–204 (PTVVVMDVSL…KNVQSMFGKL (203 aa)). Residues Ser-10, Ser-12, and Thr-86 each coordinate Mg(2+). Residue Lys-418 is modified to N6-acetyllysine.

It belongs to the Integrator subunit 14 family. In terms of assembly, component of the Integrator complex, composed of core subunits INTS1, INTS2, INTS3, INTS4, INTS5, INTS6, INTS7, INTS8, INTS9/RC74, INTS10, INTS11/CPSF3L, INTS12, INTS13, INTS14 and INTS15. The core complex associates with protein phosphatase 2A subunits PPP2CA and PPP2R1A, to form the Integrator-PP2A (INTAC) complex. INTS14 is part of the tail subcomplex, composed of INTS10, INTS13, INTS14 and INTS15. In terms of tissue distribution, strongly expressed in numerous cancer cells compared with their non-cancerous counterparts (lung, prostate, colon, stomach and skin).

The protein resides in the nucleus. Component of the integrator complex, a multiprotein complex that terminates RNA polymerase II (Pol II) transcription in the promoter-proximal region of genes. The integrator complex provides a quality checkpoint during transcription elongation by driving premature transcription termination of transcripts that are unfavorably configured for transcriptional elongation: the complex terminates transcription by (1) catalyzing dephosphorylation of the C-terminal domain (CTD) of Pol II subunit POLR2A/RPB1 and SUPT5H/SPT5, (2) degrading the exiting nascent RNA transcript via endonuclease activity and (3) promoting the release of Pol II from bound DNA. The integrator complex is also involved in terminating the synthesis of non-coding Pol II transcripts, such as enhancer RNAs (eRNAs), small nuclear RNAs (snRNAs), telomerase RNAs and long non-coding RNAs (lncRNAs). Within the integrator complex, INTS14 is part of the integrator tail module that acts as a platform for the recruitment of transcription factors at promoters. In Homo sapiens (Human), this protein is Integrator complex subunit 14.